The sequence spans 201 residues: MSRYRGPRFKKIRRLGALPGLTNKKPRTGSDLRNQSRSGKKSQYRIRLEEKQKLRFHYGLTERQLLKYVRIARKAKGSTGQVLLQLLEMRLDNILFRLGMASTIPAARQLVNHRHILVNGRIVDIPSYRCKPRDIITAKDEQKSRALIQISLDSSPHEELPNHLTLHPFQYKGLVNQIIDSKWVGLKINELLVVEYYSRQT.

The tract at residues 17–44 (ALPGLTNKKPRTGSDLRNQSRSGKKSQY) is disordered. Residues 89-149 (MRLDNILFRL…DEQKSRALIQ (61 aa)) form the S4 RNA-binding domain.

This sequence belongs to the universal ribosomal protein uS4 family. As to quaternary structure, part of the 30S ribosomal subunit. Contacts protein S5. The interaction surface between S4 and S5 is involved in control of translational fidelity.

It is found in the plastid. The protein resides in the chloroplast. In terms of biological role, one of the primary rRNA binding proteins, it binds directly to 16S rRNA where it nucleates assembly of the body of the 30S subunit. With S5 and S12 plays an important role in translational accuracy. In Atropa belladonna (Belladonna), this protein is Small ribosomal subunit protein uS4c (rps4).